The chain runs to 730 residues: Diacylglycerol kinase alpha (730 aa).

EF-hand domains lie at 111–146 (RPED…MMRV) and 156–191 (ELRP…TVPL). Positions 124, 126, 128, 135, 169, 171, 173, 175, and 180 each coordinate Ca(2+). 2 Phorbol-ester/DAG-type zinc fingers span residues 206–254 (NHIW…AQPC) and 270–320 (SHLW…GPEC). Positions 368 to 501 (SNTHPLLVFI…LDRWFLEVIP (134 aa)) constitute a DAGKc domain. An N6-acetyllysine modification is found at Lys479.

This sequence belongs to the eukaryotic diacylglycerol kinase family. Monomer.

The protein localises to the cytoplasm. The protein resides in the cytosol. The catalysed reaction is a 1,2-diacyl-sn-glycerol + ATP = a 1,2-diacyl-sn-glycero-3-phosphate + ADP + H(+). It catalyses the reaction a 1-O-alkyl-sn-glycerol + ATP = a 1-O-alkyl-sn-glycero-3-phosphate + ADP + H(+). It carries out the reaction 1-O-alkyl-2-acyl-sn-glycerol + ATP = 1-O-alkyl-2-acyl-sn-glycero-3-phosphate + ADP + H(+). The enzyme catalyses 1,2-dihexadecanoyl-sn-glycerol + ATP = 1,2-dihexadecanoyl-sn-glycero-3-phosphate + ADP + H(+). The catalysed reaction is 1-hexadecanoyl-2-(9Z-octadecenoyl)-sn-glycerol + ATP = 1-hexadecanoyl-2-(9Z-octadecenoyl)-sn-glycero-3-phosphate + ADP + H(+). It catalyses the reaction 2-(9Z-octadecenoyl)-glycerol + ATP = 2-(9Z-octadecenoyl)-sn-glycero-3-phosphate + ADP + H(+). It carries out the reaction 1,2-di-(9Z-octadecenoyl)-sn-glycerol + ATP = 1,2-di-(9Z-octadecenoyl)-sn-glycero-3-phosphate + ADP + H(+). The enzyme catalyses 1-octadecanoyl-2-(5Z,8Z,11Z,14Z-eicosatetraenoyl)-sn-glycerol + ATP = 1-octadecanoyl-2-(5Z,8Z,11Z,14Z-eicosatetraenoyl)-sn-glycero-3-phosphate + ADP + H(+). The catalysed reaction is 1,2-didecanoyl-sn-glycerol + ATP = 1,2-didecanoyl-sn-glycero-3-phosphate + ADP + H(+). It catalyses the reaction 1-O-hexadecyl-2-acetyl-sn-glycerol + ATP = 1-O-hexadecyl-2-acetyl-sn-glycero-3-phosphate + ADP + H(+). It carries out the reaction 1-O-hexadecyl-2-(5Z,8Z,11Z,14Z-eicosatetraenoyl)-sn-glycerol + ATP = 1-O-hexadecyl-2-(5Z,8Z,11Z,14Z-eicosatetraenoyl)-sn-glycero-3-phosphate + ADP + H(+). The enzyme catalyses 1-O-hexadecyl-2-(9Z-octadecenoyl)-sn-glycerol + ATP = 1-O-hexadecyl-2-(9Z-octadecenoyl)-sn-glycero-3-phosphate + ADP + H(+). The catalysed reaction is 1-O-hexadecyl-sn-glycerol + ATP = 1-O-hexadecyl-sn-glycero-3-phosphate + ADP + H(+). Its pathway is lipid metabolism; glycerolipid metabolism. Stimulated by calcium and phosphatidylserine. Its function is as follows. Diacylglycerol kinase that converts diacylglycerol/DAG into phosphatidic acid/phosphatidate/PA and regulates the respective levels of these two bioactive lipids. Thereby, acts as a central switch between the signaling pathways activated by these second messengers with different cellular targets and opposite effects in numerous biological processes. Also plays an important role in the biosynthesis of complex lipids. Can also phosphorylate 1-alkyl-2-acylglycerol in vitro as efficiently as diacylglycerol provided it contains an arachidonoyl group. Also involved in the production of alkyl-lysophosphatidic acid, another bioactive lipid, through the phosphorylation of 1-alkyl-2-acetyl glycerol. The sequence is that of Diacylglycerol kinase alpha (Dgka) from Mus musculus (Mouse).